The following is a 208-amino-acid chain: RLAPEYEAAATRYGVSGYPTLKDGEEAGAYDGPRTADGIVSHLKFISDKDASVVGFFRDLFSDGHSEFLKFAHTNVESLVKEYDDNGEGITLFRPSHLANKFEDKDLLTAYYDVDYEKKTFSHELSDFGLESTTGEVPVVAIRFVMQEEFSRFLQDYFDGNLKRYLKSEPIPETNDGPVKMDATANDVPSPYEVKGFPTIYFSPANKK.

The 44-residue stretch at 1–44 (RLAPEYEAAATRYGVSGYPTLKDGEEAGAYDGPRTADGIVSHLK) folds into the Thioredoxin 1 domain. The residue at position 44 (K44) is an N6-succinyllysine. At K49 the chain carries N6-acetyllysine. T133 is modified (phosphothreonine). The Thioredoxin 2 domain maps to 151-208 (SRFLQDYFDGNLKRYLKSEPIPETNDGPVKMDATANDVPSPYEVKGFPTIYFSPANKK). An N6-acetyllysine modification is found at K163.

This sequence belongs to the protein disulfide isomerase family. Part of the major histocompatibility complex class I (MHC I) peptide loading complex composed of TAP1, TAP2, B2M, MHC heavy chain, TAPBP, PDIA3, and CALR. Interacts with ERP27 and CANX. Interacts with SERPINA2 and SERPINA1. Interacts with ATP2A2. Within the major histocompatibility complex class I (MHC I) peptide loading complex forms reversible disulfide-linked heterodimers with TAPBP as part of its protein folding chaperone activity. This is essential to assist the dynamic assembly of the MHC I complex with high affinity antigens in the endoplasmic reticulum. Post-translationally, phosphorylated. As to expression, in the caput epididymal spermatozoa, detected in the mid-peice and at low levels in the principal piece. In the cauda epididymal spermatozoa, detected at very low levels in the principal piece and not in the mid-piece (at protein level).

The protein resides in the endoplasmic reticulum. It is found in the endoplasmic reticulum lumen. It localises to the melanosome. The catalysed reaction is Catalyzes the rearrangement of -S-S- bonds in proteins.. Protein disulfide isomerase that catalyzes the formation, isomerization, and reduction or oxidation of disulfide bonds in client proteins and functions as a protein folding chaperone. Core component of the major histocompatibility complex class I (MHC I) peptide loading complex where it functions as an essential folding chaperone for TAPBP. Through TAPBP, assists the dynamic assembly of the MHC I complex with high affinity antigens in the endoplasmic reticulum. Therefore, plays a crucial role in the presentation of antigens to cytotoxic T cells in adaptive immunity. The sequence is that of Protein disulfide-isomerase A3 from Mesocricetus auratus (Golden hamster).